Here is a 394-residue protein sequence, read N- to C-terminus: Bone morphogenetic protein 2 (394 aa).

Residues 1–19 (MVAGTRCLLVLLLPQVLLG) form the signal peptide. A propeptide spans 20–280 (GAAGLIPELG…GHPLHKREKR (261 aa)) (cleaved by PCSK5). The residue at position 86 (Ser86) is a Phosphoserine. Residues Asn134, Asn162, and Asn198 are each glycosylated (N-linked (GlcNAc...) asparagine). The interval 269-291 (GKGHPLHKREKRQAKHKQRKRLK) is disordered. Residues 272–291 (HPLHKREKRQAKHKQRKRLK) show a composition bias toward basic residues. Cystine bridges form between Cys294/Cys359, Cys323/Cys391, and Cys327/Cys393. N-linked (GlcNAc...) asparagine glycosylation occurs at Asn336.

It belongs to the TGF-beta family. In terms of assembly, homodimer; disulfide-linked. Interacts with SOSTDC1. Interacts with GREM2, RGMA, RGMB and RGMC. Interacts with ASPN. Interacts with MAFP5. Interacts with FBN1 (via N-terminal domain) and FBN2. Interacts with type I receptor BMPR1A. Interacts with type II receptor BMPR2. Interacts with SCUBE3. Interacts with TNFAIP6 (primarily via Link domain); this interaction is inhibited by hyaluronan. Interacts with ERFE. Interacts with BMPR1A/ALK3; the interaction may induce HAMP expression. Forms heterodimers with BMP6 in vitro; the heterodimer then binds to its receptor BMPR1A /ALK3 and may induce HAMP expression. Interacts with TGFBR3.

It localises to the secreted. Growth factor of the TGF-beta superfamily that plays essential roles in many developmental processes, including cardiogenesis, neurogenesis, and osteogenesis. Induces cartilage and bone formation. Initiates the canonical BMP signaling cascade by associating with type I receptor BMPR1A and type II receptor BMPR2. Once all three components are bound together in a complex at the cell surface, BMPR2 phosphorylates and activates BMPR1A. In turn, BMPR1A propagates signal by phosphorylating SMAD1/5/8 that travel to the nucleus and act as activators and repressors of transcription of target genes. Also acts to promote expression of HAMP, via the interaction with its receptor BMPR1A/ALK3. Can also signal through non-canonical pathways such as ERK/MAP kinase signaling cascade that regulates osteoblast differentiation. Also stimulates the differentiation of myoblasts into osteoblasts via the EIF2AK3-EIF2A-ATF4 pathway by stimulating EIF2A phosphorylation which leads to increased expression of ATF4 which plays a central role in osteoblast differentiation. Acts as a positive regulator of odontoblast differentiation during mesenchymal tooth germ formation, expression is repressed during the bell stage by MSX1-mediated inhibition of CTNNB1 signaling. In Mus musculus (Mouse), this protein is Bone morphogenetic protein 2 (Bmp2).